Reading from the N-terminus, the 448-residue chain is Ribulose bisphosphate carboxylase large chain (448 aa).

The residue at position 4 (lysine 4) is an N6,N6,N6-trimethyllysine. 2 residues coordinate substrate: asparagine 113 and threonine 163. Lysine 165 (proton acceptor) is an active-site residue. Substrate is bound at residue lysine 167. Mg(2+) is bound by residues lysine 191, aspartate 193, and glutamate 194. Lysine 191 carries the post-translational modification N6-carboxylysine. Histidine 284 serves as the catalytic Proton acceptor. 3 residues coordinate substrate: arginine 285, histidine 317, and serine 369.

Belongs to the RuBisCO large chain family. Type I subfamily. As to quaternary structure, heterohexadecamer of 8 large chains and 8 small chains; disulfide-linked. The disulfide link is formed within the large subunit homodimers. Requires Mg(2+) as cofactor. Post-translationally, the disulfide bond which can form in the large chain dimeric partners within the hexadecamer appears to be associated with oxidative stress and protein turnover.

The protein localises to the plastid. Its subcellular location is the chloroplast. The enzyme catalyses 2 (2R)-3-phosphoglycerate + 2 H(+) = D-ribulose 1,5-bisphosphate + CO2 + H2O. It catalyses the reaction D-ribulose 1,5-bisphosphate + O2 = 2-phosphoglycolate + (2R)-3-phosphoglycerate + 2 H(+). Functionally, ruBisCO catalyzes two reactions: the carboxylation of D-ribulose 1,5-bisphosphate, the primary event in carbon dioxide fixation, as well as the oxidative fragmentation of the pentose substrate in the photorespiration process. Both reactions occur simultaneously and in competition at the same active site. The chain is Ribulose bisphosphate carboxylase large chain from Eucryphia lucida (Leatherwood).